The sequence spans 611 residues: UvrABC system protein C (611 aa).

A GIY-YIG domain is found at 6-84 (NNPGVYRMFN…IKRSRPRFNV (79 aa)). Residues 194–229 (QSVKDHLAAAMQAASADLDFEHAAVYRDRLAALSHV) enclose the UVR domain.

This sequence belongs to the UvrC family. As to quaternary structure, interacts with UvrB in an incision complex.

The protein resides in the cytoplasm. In terms of biological role, the UvrABC repair system catalyzes the recognition and processing of DNA lesions. UvrC both incises the 5' and 3' sides of the lesion. The N-terminal half is responsible for the 3' incision and the C-terminal half is responsible for the 5' incision. This chain is UvrABC system protein C, found in Brucella suis biovar 1 (strain 1330).